We begin with the raw amino-acid sequence, 230 residues long: Endonuclease NucS (230 aa).

The protein belongs to the NucS endonuclease family.

It is found in the cytoplasm. Cleaves both 3' and 5' ssDNA extremities of branched DNA structures. The chain is Endonuclease NucS from Corynebacterium efficiens (strain DSM 44549 / YS-314 / AJ 12310 / JCM 11189 / NBRC 100395).